We begin with the raw amino-acid sequence, 332 residues long: 6-phosphogluconolactonase (332 aa).

Belongs to the cycloisomerase 2 family.

The enzyme catalyses 6-phospho-D-glucono-1,5-lactone + H2O = 6-phospho-D-gluconate + H(+). The protein operates within carbohydrate degradation; pentose phosphate pathway; D-ribulose 5-phosphate from D-glucose 6-phosphate (oxidative stage): step 2/3. Catalyzes the hydrolysis of 6-phosphogluconolactone to 6-phosphogluconate. The protein is 6-phosphogluconolactonase of Pectobacterium atrosepticum (strain SCRI 1043 / ATCC BAA-672) (Erwinia carotovora subsp. atroseptica).